Here is a 195-residue protein sequence, read N- to C-terminus: Ethylene-responsive transcription factor ERF018 (195 aa).

Over residues 1–13 (MVKQAMKEEEKKR) the composition is skewed to basic and acidic residues. Residues 1–22 (MVKQAMKEEEKKRNTAMQSKYK) form a disordered region. Residues 20–77 (KYKGVRKRKWGKWVSEIRLPHSRERIWLGSYDTPEKAARAFDAAQFCLRGGDANFNFP) constitute a DNA-binding region (AP2/ERF).

It belongs to the AP2/ERF transcription factor family. ERF subfamily.

The protein localises to the nucleus. Probably acts as a transcriptional activator. Binds to the GCC-box pathogenesis-related promoter element. May be involved in the regulation of gene expression by stress factors and by components of stress signal transduction pathways. This is Ethylene-responsive transcription factor ERF018 (ERF018) from Arabidopsis thaliana (Mouse-ear cress).